Here is a 1484-residue protein sequence, read N- to C-terminus: Chromosome partition protein MukB (1484 aa).

Residue 34 to 41 (GGNGAGKS) coordinates ATP. Coiled coils occupy residues 338 to 415 (NLVQ…RAIQ), 496 to 604 (QTAR…ALAW), 781 to 805 (AARESRLENLSAERDVLAERYATLS), 835 to 868 (EAEMRTLNGRRGELERELSDHHGQNQQSRQHYDQ), 903 to 1115 (HDAQ…SAKA), and 1206 to 1265 (DDPV…LQAV). The segment at 666 to 783 (PGGTDDARLT…AVPLFGRAAR (118 aa)) is flexible hinge.

Belongs to the SMC family. MukB subfamily. Homodimerization via its hinge domain. Binds to DNA via its C-terminal region. Interacts, and probably forms a ternary complex, with MukE and MukF via its C-terminal region. The complex formation is stimulated by calcium or magnesium. Interacts with tubulin-related protein FtsZ.

Its subcellular location is the cytoplasm. The protein resides in the nucleoid. Functionally, plays a central role in chromosome condensation, segregation and cell cycle progression. Functions as a homodimer, which is essential for chromosome partition. Involved in negative DNA supercoiling in vivo, and by this means organize and compact chromosomes. May achieve or facilitate chromosome segregation by condensation DNA from both sides of a centrally located replisome during cell division. In Sodalis glossinidius (strain morsitans), this protein is Chromosome partition protein MukB.